The sequence spans 493 residues: Inosine-5'-monophosphate dehydrogenase (493 aa).

2 CBS domains span residues 97 to 155 (VIID…NAPI) and 159 to 219 (MTSE…AKDE). NAD(+)-binding positions include Asp-253 and 303 to 305 (GIG). Residues Gly-305 and Gly-307 each coordinate K(+). Ser-308 is an IMP binding site. K(+) is bound at residue Cys-310. The active-site Thioimidate intermediate is Cys-310. IMP-binding positions include 343–345 (DGG), 366–367 (GS), and 390–394 (YRGMG). The Proton acceptor role is filled by Arg-406. Glu-421 lines the IMP pocket. K(+)-binding residues include Glu-475, Ser-476, and His-477.

The protein belongs to the IMPDH/GMPR family. In terms of assembly, homotetramer. It depends on K(+) as a cofactor.

It catalyses the reaction IMP + NAD(+) + H2O = XMP + NADH + H(+). The protein operates within purine metabolism; XMP biosynthesis via de novo pathway; XMP from IMP: step 1/1. Mycophenolic acid (MPA) is a non-competitive inhibitor that prevents formation of the closed enzyme conformation by binding to the same site as the amobile flap. In contrast, mizoribine monophosphate (MZP) is a competitive inhibitor that induces the closed conformation. MPA is a potent inhibitor of mammalian IMPDHs but a poor inhibitor of the bacterial enzymes. MZP is a more potent inhibitor of bacterial IMPDH. In terms of biological role, catalyzes the conversion of inosine 5'-phosphate (IMP) to xanthosine 5'-phosphate (XMP), the first committed and rate-limiting step in the de novo synthesis of guanine nucleotides, and therefore plays an important role in the regulation of cell growth. The protein is Inosine-5'-monophosphate dehydrogenase of Streptococcus pyogenes serotype M1.